Consider the following 367-residue polypeptide: Chorismate synthase (367 aa).

NADP(+) is bound at residue Arg48. Residues 125–127, 241–242, Gly285, 300–304, and Arg326 contribute to the FMN site; these read RSS, NA, and KPTSS.

The protein belongs to the chorismate synthase family. Homotetramer. FMNH2 serves as cofactor.

The enzyme catalyses 5-O-(1-carboxyvinyl)-3-phosphoshikimate = chorismate + phosphate. Its pathway is metabolic intermediate biosynthesis; chorismate biosynthesis; chorismate from D-erythrose 4-phosphate and phosphoenolpyruvate: step 7/7. Catalyzes the anti-1,4-elimination of the C-3 phosphate and the C-6 proR hydrogen from 5-enolpyruvylshikimate-3-phosphate (EPSP) to yield chorismate, which is the branch point compound that serves as the starting substrate for the three terminal pathways of aromatic amino acid biosynthesis. This reaction introduces a second double bond into the aromatic ring system. The protein is Chorismate synthase of Dinoroseobacter shibae (strain DSM 16493 / NCIMB 14021 / DFL 12).